The primary structure comprises 48 residues: ATP synthase protein 8 (48 aa).

A helical membrane pass occupies residues 4-24 (LVPFFFVNQVVYAFVILTVLI).

Belongs to the ATPase protein 8 family. In terms of assembly, F-type ATPases have 2 components, CF(1) - the catalytic core - and CF(0) - the membrane proton channel.

It localises to the mitochondrion membrane. Mitochondrial membrane ATP synthase (F(1)F(0) ATP synthase or Complex V) produces ATP from ADP in the presence of a proton gradient across the membrane which is generated by electron transport complexes of the respiratory chain. F-type ATPases consist of two structural domains, F(1) - containing the extramembraneous catalytic core and F(0) - containing the membrane proton channel, linked together by a central stalk and a peripheral stalk. During catalysis, ATP synthesis in the catalytic domain of F(1) is coupled via a rotary mechanism of the central stalk subunits to proton translocation. Part of the complex F(0) domain. Minor subunit located with subunit a in the membrane. This chain is ATP synthase protein 8 (atp8), found in Aspergillus amstelodami.